A 238-amino-acid chain; its full sequence is Ribonuclease PH (238 aa).

Phosphate contacts are provided by residues arginine 86 and 124–126 (GTR).

Belongs to the RNase PH family. As to quaternary structure, homohexameric ring arranged as a trimer of dimers.

It carries out the reaction tRNA(n+1) + phosphate = tRNA(n) + a ribonucleoside 5'-diphosphate. Phosphorolytic 3'-5' exoribonuclease that plays an important role in tRNA 3'-end maturation. Removes nucleotide residues following the 3'-CCA terminus of tRNAs; can also add nucleotides to the ends of RNA molecules by using nucleoside diphosphates as substrates, but this may not be physiologically important. Probably plays a role in initiation of 16S rRNA degradation (leading to ribosome degradation) during starvation. In Haemophilus influenzae (strain 86-028NP), this protein is Ribonuclease PH.